A 123-amino-acid polypeptide reads, in one-letter code: Small ribosomal subunit protein uS12 (123 aa).

The disordered stretch occupies residues 1–30; that stretch reads MPTIQQLIRKPRQPKIKRSKSQHMEGCPQK. Basic residues predominate over residues 9–21; that stretch reads RKPRQPKIKRSKS. 3-methylthioaspartic acid is present on D89. Positions 104–123 are disordered; the sequence is TQGVKDRRQRRSKYGAKRPK. Residues 110 to 123 are compositionally biased toward basic residues; that stretch reads RRQRRSKYGAKRPK.

This sequence belongs to the universal ribosomal protein uS12 family. Part of the 30S ribosomal subunit. Contacts proteins S8 and S17. May interact with IF1 in the 30S initiation complex.

Its function is as follows. With S4 and S5 plays an important role in translational accuracy. In terms of biological role, interacts with and stabilizes bases of the 16S rRNA that are involved in tRNA selection in the A site and with the mRNA backbone. Located at the interface of the 30S and 50S subunits, it traverses the body of the 30S subunit contacting proteins on the other side and probably holding the rRNA structure together. The combined cluster of proteins S8, S12 and S17 appears to hold together the shoulder and platform of the 30S subunit. This chain is Small ribosomal subunit protein uS12, found in Jannaschia sp. (strain CCS1).